Reading from the N-terminus, the 843-residue chain is Protein P (843 aa).

The terminal protein domain (TP) stretch occupies residues 1-177 (MPLSYPHFRK…FCGSPYSWEQ (177 aa)). A spacer region spans residues 178–346 (ELQHGSTSLN…YCLSHIINLL (169 aa)). The segment at 284–308 (EANPSLSTSKRHTSTGNAVELNPVP) is disordered. The interval 347-690 (EDWGPCYEHG…YMNLYPVARQ (344 aa)) is polymerase/reverse transcriptase domain (RT). Residues 357 to 600 (QHHIRTPRTP…YNLHFMGYVI (244 aa)) enclose the Reverse transcriptase domain. The Mg(2+) site is built by aspartate 429, aspartate 551, and aspartate 552.

The protein belongs to the hepadnaviridae P protein family.

The enzyme catalyses DNA(n) + a 2'-deoxyribonucleoside 5'-triphosphate = DNA(n+1) + diphosphate. It catalyses the reaction Endonucleolytic cleavage to 5'-phosphomonoester.. Activated by host HSP70 and HSP40 in vitro to be able to bind the epsilon loop of the pgRNA. Because deletion of the RNase H region renders the protein partly chaperone-independent, the chaperones may be needed indirectly to relieve occlusion of the RNA-binding site by this domain. Inhibited by several reverse-transcriptase inhibitors: Lamivudine, Adefovir and Entecavir. In terms of biological role, multifunctional enzyme that converts the viral RNA genome into dsDNA in viral cytoplasmic capsids. This enzyme displays a DNA polymerase activity that can copy either DNA or RNA templates, and a ribonuclease H (RNase H) activity that cleaves the RNA strand of RNA-DNA heteroduplexes in a partially processive 3'- to 5'-endonucleasic mode. Neo-synthesized pregenomic RNA (pgRNA) are encapsidated together with the P protein, and reverse-transcribed inside the nucleocapsid. Initiation of reverse-transcription occurs first by binding the epsilon loop on the pgRNA genome, and is initiated by protein priming, thereby the 5'-end of (-)DNA is covalently linked to P protein. Partial (+)DNA is synthesized from the (-)DNA template and generates the relaxed circular DNA (RC-DNA) genome. After budding and infection, the RC-DNA migrates in the nucleus, and is converted into a plasmid-like covalently closed circular DNA (cccDNA). The activity of P protein does not seem to be necessary for cccDNA generation, and is presumably released from (+)DNA by host nuclear DNA repair machinery. The chain is Protein P from Homo sapiens (Human).